The chain runs to 587 residues: Glucosylglycerate phosphorylase (587 aa).

The active-site Nucleophile is the D236.

It belongs to the glycosyl hydrolase 13 family. Glucosylglycerate phosphorylase subfamily.

The enzyme catalyses (2R)-2-O-(alpha-D-glucopyranosyl)-glycerate + phosphate = (R)-glycerate + alpha-D-glucose 1-phosphate. Its function is as follows. Catalyzes the reversible phosphorolysis of glucosylglycerate into alpha-D-glucose 1-phosphate (Glc1P) and D-glycerate. May be a regulator of intracellular levels of glucosylglycerate, a compatible solute that primarily protects organisms facing salt stress and very specific nutritional constraints. Cannot catalyze the phosphorolysis of sucrose. This is Glucosylglycerate phosphorylase from Spirochaeta thermophila (strain ATCC 700085 / DSM 6578 / Z-1203).